The sequence spans 119 residues: MDKIVLESCRFYGYHGAFKEEQTLGQIFLVDLELSVDLQAASLSDQLTDTVHYGMVFDSVRQLVEGGKFILIERLAGAICEQLFNEFPPIEAIKVAIKKENPPIAGHYKAVGIELERQR.

Substrate contacts are provided by residues glutamate 21, tyrosine 53, and 72-73; that span reads IE. Residue lysine 99 is the Proton donor/acceptor of the active site.

Belongs to the DHNA family.

It catalyses the reaction 7,8-dihydroneopterin = 6-hydroxymethyl-7,8-dihydropterin + glycolaldehyde. The protein operates within cofactor biosynthesis; tetrahydrofolate biosynthesis; 2-amino-4-hydroxy-6-hydroxymethyl-7,8-dihydropteridine diphosphate from 7,8-dihydroneopterin triphosphate: step 3/4. Functionally, catalyzes the conversion of 7,8-dihydroneopterin to 6-hydroxymethyl-7,8-dihydropterin. The polypeptide is Dihydroneopterin aldolase (folB) (Streptococcus pyogenes serotype M6 (strain ATCC BAA-946 / MGAS10394)).